A 686-amino-acid chain; its full sequence is Probable metal-nicotianamine transporter YSL10 (686 aa).

A run of 14 helical transmembrane segments spans residues 36–56 (VTLRALAVSALLGAMFSVIVM), 60–80 (LTTGIIPSLNVSAGLLGFFLL), 109–129 (CVVACSGIAFSGGFGSYIFAM), 151–171 (LGWMIGFLFIVSFLGLFSVVP), 212–232 (MLGKFFVMSFSWGFFQWFYTG), 271–291 (LVNISVLLGGVMSWGIMWPLI), 316–336 (VFISISLILGDGLYNFLKVMT), 383–403 (IPNWLALSAYVVIAVVSIATV), 415–435 (VAVSYVVAPVLAFCNAYGCGL), 461–481 (GGIIAGLAACGVMIGIVSTAS), 501–521 (FVSQVIGTAMGCVIAPSVFWL), 556–576 (GSLPKHCLDLCIGFFVAAIAV), 597–617 (MAIPFYLGPYFGIDMCIGSLI), and 639–659 (GLICGDGIWTLPQSVLALAGV).

The protein belongs to the YSL (TC 2.A.67.2) family.

The protein localises to the membrane. Functionally, may be involved in the transport of nicotianamine-chelated metals. The chain is Probable metal-nicotianamine transporter YSL10 (YSL10) from Oryza sativa subsp. japonica (Rice).